We begin with the raw amino-acid sequence, 371 residues long: tRNA-specific 2-thiouridylase MnmA (371 aa).

Residues 13-20 and Met-39 contribute to the ATP site; that span reads GMSGGVDS. Residues 99–101 form an interaction with target base in tRNA region; that stretch reads NPD. Cys-104 (nucleophile) is an active-site residue. Cys-104 and Cys-200 form a disulfide bridge. Gly-128 serves as a coordination point for ATP. The interaction with tRNA stretch occupies residues 150 to 152; the sequence is KDQ. Cys-200 functions as the Cysteine persulfide intermediate in the catalytic mechanism. The segment at 309–310 is interaction with tRNA; sequence RY.

The protein belongs to the MnmA/TRMU family.

It localises to the cytoplasm. It catalyses the reaction S-sulfanyl-L-cysteinyl-[protein] + uridine(34) in tRNA + AH2 + ATP = 2-thiouridine(34) in tRNA + L-cysteinyl-[protein] + A + AMP + diphosphate + H(+). Its function is as follows. Catalyzes the 2-thiolation of uridine at the wobble position (U34) of tRNA, leading to the formation of s(2)U34. The polypeptide is tRNA-specific 2-thiouridylase MnmA (Bacillus velezensis (strain DSM 23117 / BGSC 10A6 / LMG 26770 / FZB42) (Bacillus amyloliquefaciens subsp. plantarum)).